Here is a 3303-residue protein sequence, read N- to C-terminus: Protein unc-80 homolog (3303 aa).

A compositionally biased stretch (low complexity) spans 1 to 37 (MVTNAAGTAATGGATSNTTNNNNLQTNNNSHGANNNN). The disordered stretch occupies residues 1–43 (MVTNAAGTAATGGATSNTTNNNNLQTNNNSHGANNNNDDFDFD). The helical transmembrane segment at 202 to 222 (LFSVPTITLFVYLFAPIIHHL) threads the bilayer. 7 disordered regions span residues 284 to 316 (LSAD…VSSP), 361 to 422 (LQQQ…SESI), 491 to 512 (LYQG…KDYI), 526 to 546 (AEEP…KKKR), 1036 to 1067 (FRRR…SERN), 1443 to 1563 (LHEP…DDTA), and 1627 to 1671 (VEPT…KDRI). The segment covering 361–377 (LQQQQSQSRRGSRQSMN) has biased composition (low complexity). Composition is skewed to basic and acidic residues over residues 378-391 (SRDK…KFEF) and 401-422 (SMKE…SESI). The span at 495–505 (PGSNSRDSPGS) shows a compositional bias: polar residues. The span at 1058 to 1067 (SDSTSSSERN) shows a compositional bias: polar residues. Positions 1490-1499 (FKRRSLKLRR) are enriched in basic residues. Residues 1546–1556 (DDQQPESPTDS) show a composition bias toward polar residues. The segment covering 1660–1671 (KRKDSLSRKDRI) has biased composition (basic and acidic residues). 3 helical membrane passes run 1969–1989 (VYEI…ALFL), 2018–2038 (LPQQ…MFYV), and 2048–2068 (LVGS…GIMF). 3 disordered regions span residues 2518-2550 (NGPY…FEEE), 3003-3158 (EEKR…FKAQ), and 3170-3262 (FRHS…YRDN). The span at 3003–3018 (EEKRYDRESSEQKKSD) shows a compositional bias: basic and acidic residues. Polar residues-rich tracts occupy residues 3033–3053 (QRPS…SHSH) and 3071–3106 (PSDT…SQSG). Residues 3124 to 3134 (SGHGSGGGIGT) show a composition bias toward gly residues. The segment covering 3135 to 3152 (GAASAVPSHLSHSQSLQQ) has biased composition (low complexity). Residues 3198–3217 (SRLQRSKAASRKTFRLKRSR) are compositionally biased toward basic residues. Residues 3226–3239 (IVTSQEEQAPQAQA) are compositionally biased toward polar residues. Residues 3246–3257 (SWDSVSQTSSTS) are compositionally biased toward low complexity.

It belongs to the unc-80 family. As to quaternary structure, interacts with unc79 and na. Can interact with unc79 independently of na.

It is found in the membrane. In terms of biological role, component of the na (narrow abdomen) sodium channel complex. In the circadian clock neurons it functions with na and unc79 to promote circadian rhythmicity. In Drosophila melanogaster (Fruit fly), this protein is Protein unc-80 homolog.